Reading from the N-terminus, the 295-residue chain is Microcin B17-processing protein McbB (295 aa).

It localises to the cytoplasm. Functionally, necessary to process the inactive microcin B17 (McbA) precursor into the active peptide. This chain is Microcin B17-processing protein McbB (mcbB), found in Escherichia coli.